Consider the following 432-residue polypeptide: Transcriptional adapter 3 (432 aa).

Residue Lys-21 forms a Glycyl lysine isopeptide (Lys-Gly) (interchain with G-Cter in SUMO2) linkage. A coiled-coil region spans residues 40-69 (IEELDTLQLELETLLSSASRRLRVLEAETQ). The tract at residues 87–127 (GRDHELGAPPKHGKPKKQKLEGKTGHGPGPGPGRPKSKNVQ) is disordered. A Glycyl lysine isopeptide (Lys-Gly) (interchain with G-Cter in SUMO2) cross-link involves residue Lys-129. The segment at 272–319 (NIISPMEDSPIPDMSGKESGADGASTSPRNQNKPFSVPHTKSLESRIK) is disordered. Phosphoserine is present on residues Ser-280 and Ser-298. A compositionally biased stretch (polar residues) spans 295-305 (ASTSPRNQNKP). Residues 367–407 (LLRLAKEEVSRQELRQRVRMADNEVMDAFRKIMAARQKKRT) are a coiled coil. Lys-418 carries the N6-acetyllysine modification.

Belongs to the NGG1 family. As to quaternary structure, the PCAF complex is composed of a number of TBP-associated factors (TAFS), such as TAF5, TAF5L, TAF6, TAF6L, TAF9, TAF10 and TAF12, PCAF, and also PCAF-associated factors (PAFs), such as TADA2L/ADA2, TADA3L/ADA3 and SPT3. Interacts directly with TADA2L and PCAF and also with the high-risk HPV oncoprotein E6. Component of the STAGA transcription coactivator-HAT complex, at least composed of SUPT3H, GCN5L2, TAF5L, TAF6L, SUPT7L, TADA3L, TAD1L, TAF10, TAF12, TRRAP and TAF9. Component of the TFTC-HAT complex. Component of the ADA2A-containing complex (ATAC), composed of KAT14, KAT2A, TADA2L, TADA3L, ZZ3, MBIP, WDR5, YEATS2, CCDC101 and DR1.

The protein localises to the nucleus. Functions as a component of the PCAF complex. The PCAF complex is capable of efficiently acetylating histones in a nucleosomal context. The PCAF complex could be considered as the human version of the yeast SAGA complex. Also known as a coactivator for p53/TP53-dependent transcriptional activation. Component of the ATAC complex, a complex with histone acetyltransferase activity on histones H3 and H4. The sequence is that of Transcriptional adapter 3 (Tada3) from Mus musculus (Mouse).